The chain runs to 699 residues: uncharacterized protein (699 aa).

Disordered stretches follow at residues 175 to 208 (PTLG…ASLS), 289 to 364 (PTAK…EEPD), and 539 to 603 (RAKE…KEYL). The span at 183-194 (PSKHGDHSDSKT) shows a compositional bias: basic and acidic residues. The segment covering 195–208 (YESPISNSQAASLS) has biased composition (polar residues). The segment covering 308–322 (SKHKKRPKRLSKFKQ) has biased composition (basic residues). A compositionally biased stretch (basic and acidic residues) spans 323–338 (AKLETKKSGNKDHATS). 2 stretches are compositionally biased toward polar residues: residues 339–360 (SEKL…SSSI) and 548–573 (HSNA…NTKL). Residues 574-603 (NPKEEDKSTVESELKAPPKEKSSETSKEYL) show a composition bias toward basic and acidic residues.

It localises to the cytoplasm. This is an uncharacterized protein from Schizosaccharomyces pombe (strain 972 / ATCC 24843) (Fission yeast).